Consider the following 629-residue polypeptide: Kelch-like protein 8 (629 aa).

Over residues 1–10 (MASESTNGKQ) the composition is skewed to polar residues. Positions 1-40 (MASESTNGKQARSHVTKGRRQYQHQHQQQQQQQQQVRSRS) are disordered. Ala-2 carries the post-translational modification N-acetylalanine. Basic residues predominate over residues 11–23 (ARSHVTKGRRQYQ). Residues 24–35 (HQHQQQQQQQQQ) show a composition bias toward low complexity. Residues 76-143 (CDVTLKVGSK…VYSSRLTLTV (68 aa)) form the BTB domain. The BACK domain maps to 178–279 (CLAVRAFAES…LPVDFLMGVV (102 aa)). 6 Kelch repeats span residues 328-375 (VLFC…SVEG), 376-422 (KVYA…SLGG), 424-469 (IYAI…ALIN), 471-516 (VYAV…ELHG), 517-563 (CLYV…TVMG), and 565-610 (IFAV…VCDC).

As to quaternary structure, component of the BCR(KLHL8) E3 ubiquitin ligase complex, at least composed of CUL3, KLHL8 and RBX1. Interacts with RAPSN.

It functions in the pathway protein modification; protein ubiquitination. Substrate-specific adapter of a BCR (BTB-CUL3-RBX1) E3 ubiquitin ligase complex required for The BCR(KLHL8) ubiquitin ligase complex mediates ubiquitination and degradation of RAPSN. This Mus musculus (Mouse) protein is Kelch-like protein 8 (Klhl8).